The sequence spans 91 residues: Protein YchS (91 aa).

This chain is Protein YchS (ychS), found in Escherichia coli O157:H7.